We begin with the raw amino-acid sequence, 187 residues long: UPF0301 protein PC1_3712 (187 aa).

The protein belongs to the UPF0301 (AlgH) family.

The polypeptide is UPF0301 protein PC1_3712 (Pectobacterium carotovorum subsp. carotovorum (strain PC1)).